A 1159-amino-acid polypeptide reads, in one-letter code: Anillin-like protein 1 (1159 aa).

5 disordered regions span residues 43 to 81, 266 to 327, 409 to 430, 549 to 608, and 629 to 699; these read VASPTKVFGSSSKCNDGPSTPVHFHPQEPKETTPNMKEN, QQVS…TKTT, KLKKSSSANVTAPPAPTSAPVP, AIPK…GDVI, and FGFM…KSSS. Over residues 50 to 60 the composition is skewed to polar residues; that stretch reads FGSSSKCNDGP. The segment covering 287–327 has biased composition (low complexity); sequence ASSATSSSSSTTTLTTISGASGSTTSGISNAPQDSASTKTT. The segment covering 421–430 has biased composition (pro residues); that stretch reads PPAPTSAPVP. Residues 564 to 584 show a composition bias toward polar residues; the sequence is SASSLYSQGARSNTASPASKS. Acidic residues predominate over residues 660-684; it reads VIEEETENEDESEPYEPEEEEDDDA. The PH domain occupies 1029–1147; it reads DITYHGFLSM…WLSLINSTSK (119 aa).

In terms of tissue distribution, strongly expressed in dividing neuroblasts under the ventral epidermal cells during ventral enclosure.

It is found in the cytoplasm. Its subcellular location is the cell cortex. It localises to the cytoskeleton. The protein localises to the spindle. The protein resides in the midbody. It is found in the cleavage furrow. Required for contractile events in embryos that occur prior to mitosis, such as cortical ruffling and pseudocleavage. Promotes membrane ruffling by organizing cortical patches of septins and myosin II. Not generally required for cytokinesis in mitotic cells. Required for the asymmetric cleavage events that extrude the two polar bodies during oocyte meiosis. Not required for meiotic contractile ring assembly, initiation or closure but is required for the transformation of the contractile ring from a disk above the spindle to a tube around the spindle midzone. Promotes astral microtubule-directed cortical myosin polarization and cleavage furrow ingression. Regulates neuroblast cytokinesis during mid- to late-embryogenesis and is required for ventral enclosure. In Caenorhabditis elegans, this protein is Anillin-like protein 1 (ani-1).